We begin with the raw amino-acid sequence, 298 residues long: N-acetylmuramic acid 6-phosphate etherase (298 aa).

Residues 55 to 218 (IHTQVSGGGR…STGLMIKSGK (164 aa)) enclose the SIS domain. Catalysis depends on glutamate 83, which acts as the Proton donor. Glutamate 114 is an active-site residue.

Belongs to the GCKR-like family. MurNAc-6-P etherase subfamily. Homodimer.

It carries out the reaction N-acetyl-D-muramate 6-phosphate + H2O = N-acetyl-D-glucosamine 6-phosphate + (R)-lactate. It participates in amino-sugar metabolism; 1,6-anhydro-N-acetylmuramate degradation. Its pathway is amino-sugar metabolism; N-acetylmuramate degradation. The protein operates within cell wall biogenesis; peptidoglycan recycling. Its function is as follows. Specifically catalyzes the cleavage of the D-lactyl ether substituent of MurNAc 6-phosphate, producing GlcNAc 6-phosphate and D-lactate. Together with AnmK, is also required for the utilization of anhydro-N-acetylmuramic acid (anhMurNAc) either imported from the medium or derived from its own cell wall murein, and thus plays a role in cell wall recycling. This chain is N-acetylmuramic acid 6-phosphate etherase, found in Escherichia coli O6:K15:H31 (strain 536 / UPEC).